We begin with the raw amino-acid sequence, 1026 residues long: Unconventional myosin-Ic (1026 aa).

Met1 carries the post-translational modification N-acetylmethionine. Positions 12–695 constitute a Myosin motor domain; it reads GVQDFLLLEN…TLFITEDALE (684 aa). ATP-binding positions include Asn53, Tyr61, 104–113, and 157–161; these read SGESGAGKTE and NDNSS. The residue at position 349 (Lys349) is an N6-methyllysine. The tract at residues 572 to 594 is actin-binding; it reads LAKLMDILMSKEPSYVRCIKPND. IQ domains follow at residues 698–727 and 721–750; these read KQTIAVTLQKSWRGYRERANYHRIRHAVIV and IRHAVIVIQSWWRGVKGRRKAKHRRQAADT. A TH1 domain is found at 849 to 1024; sequence KDGYSRSVPK…NGHLSVTTPR (176 aa).

It belongs to the TRAFAC class myosin-kinesin ATPase superfamily. Myosin family. As to quaternary structure, interacts (via its IQ motifs) with calm.

The protein resides in the cytoplasm. It is found in the cell cortex. The protein localises to the cell projection. It localises to the ruffle membrane. Its subcellular location is the cytoplasmic vesicle. The protein resides in the stereocilium membrane. Functionally, myosins are actin-based motor molecules with ATPase activity. Unconventional myosins serve in intracellular movements. Their highly divergent tails are presumed to bind to membranous compartments, which would be moved relative to actin filaments. The polypeptide is Unconventional myosin-Ic (myo1c) (Danio rerio (Zebrafish)).